We begin with the raw amino-acid sequence, 525 residues long: G patch domain-containing protein 3 (525 aa).

Residues 264–316 (YLADIPASPCGEPEEEVGKEEEEESHSDEDDDRGEEWERHEALHEDVTGQERT) form a disordered region. Acidic residues predominate over residues 275 to 298 (EPEEEVGKEEEEESHSDEDDDRGE). The segment covering 299 to 316 (EWERHEALHEDVTGQERT) has biased composition (basic and acidic residues). The region spanning 410-458 (TKGIGRKVMERQGWAEGQGLGCRCSGVPEALDSDGQHPRCKRGLGYHGE) is the G-patch domain.

As to quaternary structure, interacts with mitochondrial MAVS; the interaction is markedly increased upon viral infection. In terms of tissue distribution, expressed in ocular tissues including retinal pigment epithelium, cornea, ciliary muscle and non-pigmented ciliary epithelium. Also expressed in optic nerve, cartilage, skin and lymph node.

The protein resides in the nucleus. It localises to the cytoplasm. Functionally, involved in transcriptional regulation. It is able to activate transcription from the CXCR4 promoter and therefore it might control neural crest cell migration involved in ocular and craniofacial development. Is a negative regulator of immune antiviral response, acting via down-regulation of RIG-I-like receptors signaling and inhibition of type I interferon production. The control mechanism involves interaction with mitochondrial MAVS and inhibition of MAVS assembly with downstream proteins implicated in antiviral response, such as TBK1 and TRAF6. The protein is G patch domain-containing protein 3 (GPATCH3) of Homo sapiens (Human).